Here is a 2082-residue protein sequence, read N- to C-terminus: MNEIKSESLLQTRPFKLGIEDIQNLGSSYFIENNEKLKKYNNEISSLKKELDILNEKMGKCTTTTKIVEPAKTPEFTFWYYELKEMKGFQDLVMYEVKKKKKHFKVLSHSCLKYLSNREKMKIKKQEEEEKRLKLYSKNISSYMDVFWKKIEKLVWEEKKRELQQTLNKKKEMRFKKFVKEAIKKIKDARHNNAHELFENKYVSMSSNNNSEIVNNNASSVDNGDKELKEDDLTDQEEEDYLLDEQMSSTDESENKEEEINMLDDEANLPIEELLKRMYGFKSGEDYINFMENEDDANEENVIETSHNDEKSGDNSIGEDDNNNDEKGGDNNIDEDDNNNDEKSGDNSIGEDDNNNDHKSGDNNIDEDDNNNDHKSEDNSIGEDDNNNDEKGGDNNIDENDNNSDHKSEDNNIDENDNNSDHQSDQEQFNHETKDDIIKNSSYEHIDNKNYYNKTGEDYKSDKENYSPTRFHNKLKKEKYDEYDTKLKIEKREEENKNYEKDEHEYESDNYDKEKINKKKELILLKNDIENDSDETSEHIKRDSRSSCQKQNCEKKRRIIKDEYNLRRTKIAKSKPSSDNNNSENDNNNDNNNDNNNDNNDDNNDDNNDDNNDDNNDDNNDDNNDDNNNEHKNDSDDNDDILTCNMDEKHLTKIPPIIKATLRDYQHAGLHWLLYLYKNNINGILADEMGLGKTLQCISLLSYLAYYFNIWGPHLVIVPTSILINWEIELKRFCPCFKILSYYGNQNERYKKRVGWFNKDSFHICISSYSTVVKDHLVFKRKRWKYIILDEAHNIKNFNTKRWNIILSLKRDNCLLITGTPLQNSLEELWSLLHFLMPNIFTSHLDFKEWFSDPLNLAIEKSKIHHSKELIDRLHTVIRPYILRRLKKNVEKEMPNKYEHIIKCKLTRRQQILYDEFINNKNVQNTLNTGNYIGLMNILIQLRKVCNHCDLFTNKYIQTPYYYMLSIRYFVPRFFILFEKNYYADFYLILFLHNEFTSLGGRDVTKETSPSSKSFDLAHILTKHNTNELYDNNHISELYDNNHISELYDNNHISELYDNNHISELYDNPMSHKNYKHNSNGYTYPNDPINNMNNNPSGFTKTSEQFGQIVSHERDNNYHMMDHNNMNNLLSKEMVNSLRNDDNSNNNFYKYSLTSNNNDSQTSIHDNKQCDYNKLCADTFNNINSIGNEEKRSLNVLNEQNNNNSKDNNNNIDNNNNIDNNNNIDNNNNIDNNNNIDNNNNNIDNNNNIDNHHNNNQHCNYNDNWPSDYPTNIINHRNAFLSILKLLNQSNPLNNDNNNNNNNNNGNNNIYNMNRYNSRNSRNSSLSNIFSSNTSKMNSFQLDFLYTNSFINQDALCKNSFFVNINIEDVHSYIYNSIYKEYIPKNILSFSDEFLTELNNNYDILSLYIDPYNRYKSYNEYLYKMKEEGTLTNQQSLGDINNKHIYHKSTSNENTHMKNRKTFIYKYNNMFKVINNDTQYQNIFTDDTNNSYYNSLEHNLWIKRNQIDERKKEEEEEQNKYYNVCMNNLYILRNERIPIFGKNFLDLIKKEFTKDKNIVYNYTNNVPIDYYSSVKEVWVEDICEKDNKKRKCKREKRWYKKIKKTNNPPEDSEVYRENSSDVEKYNCDVEKDNCDDEEKDNCDDEDMNSNLSSNVYGCIDISSQNFIHSRYHNPMMNMSYIIEFLFPNMEQFLKRHEKMIHNFTLINNPSVICKSHDIRINNNLLNYSNDKMNPIILQIKNATRVYHDAFLKQSIIFPLNKDISLGSGKLCALEKLLSKCKREGNKCLLFTQFIKMLDILEIFLNHLNYSFIRLDGSTKVEQRQKIVTKFNNDKSIFIFISSTRSGSIGINLTAANVVIFYDTDWNPSIDKQAMDRCHRIGQTKDVHVFRFVCEYTVEENIWKKQLQKRKLDNICINMGNFNNSNTHSKITDTDPTHNKDWFTNVDTIKEVFINKKNNDDDDDMYKDRLLHEQVENKDKMNVRFEKTLEHVEDKDDIRALNETKKETQNEISQNMQEFTTRNDFQDSYNLTSYCFNFLNENLTDSLKQQIDEMRMKIEIEMMNTGDENMSLSDLSNKSHNSE.

The region spanning 66-138 is the HSA domain; that stretch reads KIVEPAKTPE…EEKRLKLYSK (73 aa). A compositionally biased stretch (low complexity) spans 209–221; sequence NNSEIVNNNASSV. Disordered stretches follow at residues 209–234 and 301–470; these read NNSE…DDLT and NVIE…SPTR. Composition is skewed to basic and acidic residues over residues 419-448 and 455-465; these read NSDH…HIDN and TGEDYKSDKEN. Residues 476 to 531 are a coiled coil; that stretch reads KKEKYDEYDTKLKIEKREEENKNYEKDEHEYESDNYDKEKINKKKELILLKNDIEN. Residues 532–641 are disordered; the sequence is DSDETSEHIK…KNDSDDNDDI (110 aa). Positions 536 to 545 are enriched in basic and acidic residues; that stretch reads TSEHIKRDSR. Low complexity predominate over residues 579-598; it reads DNNNSENDNNNDNNNDNNND. The segment covering 599 to 627 has biased composition (acidic residues); the sequence is NNDDNNDDNNDDNNDDNNDDNNDDNNDDN. One can recognise a Helicase ATP-binding domain in the interval 674–839; it reads LYLYKNNING…WSLLHFLMPN (166 aa). 687–694 lines the ATP pocket; the sequence is DEMGLGKT. A DEAH box motif is present at residues 790 to 793; that stretch reads DEAH. The tract at residues 1199-1255 is disordered; it reads EQNNNNSKDNNNNIDNNNNIDNNNNIDNNNNIDNNNNIDNNNNNIDNNNNIDNHHNN. In terms of domain architecture, Helicase C-terminal spans 1772 to 1922; the sequence is ALEKLLSKCK…NICINMGNFN (151 aa). The stretch at 1972–2060 forms a coiled coil; it reads EQVENKDKMN…DEMRMKIEIE (89 aa).

Belongs to the SNF2/RAD54 helicase family. SWR1 subfamily. As to quaternary structure, component of a chromatin-remodeling complex.

It is found in the nucleus. Functionally, catalytic component of a chromatin remodeling complex. The chain is Probable ATP-dependent helicase PF08_0048 from Plasmodium falciparum (isolate 3D7).